The following is a 288-amino-acid chain: Translocon-associated protein subunit alpha (288 aa).

Positions Met1–Ala28 are cleaved as a signal peptide. The Lumenal segment spans residues Asp29–Thr208. The tract at residues Glu34–Ile69 is disordered. N-linked (GlcNAc...) asparagine glycans are attached at residues Asn137 and Asn192. Residues Ile209 to Val229 form a helical membrane-spanning segment. At Leu230–Gln288 the chain is on the cytoplasmic side. The segment at Lys267 to Gln288 is disordered.

Belongs to the TRAP-alpha family. Heterotetramer of TRAP-alpha, TRAP-beta, TRAP-delta and TRAP-gamma. Phosphorylated in its cytoplasmic tail.

The protein resides in the endoplasmic reticulum membrane. In terms of biological role, TRAP proteins are part of a complex whose function is to bind calcium to the ER membrane and thereby regulate the retention of ER resident proteins. May be involved in the recycling of the translocation apparatus after completion of the translocation process or may function as a membrane-bound chaperone facilitating folding of translocated proteins. This is Translocon-associated protein subunit alpha (ssr1) from Oncorhynchus mykiss (Rainbow trout).